The sequence spans 276 residues: tRNA dimethylallyltransferase (276 aa).

The interaction with substrate tRNA stretch occupies residues 9–12 (DSLS).

Belongs to the IPP transferase family. As to quaternary structure, monomer. Mg(2+) serves as cofactor.

It carries out the reaction adenosine(37) in tRNA + dimethylallyl diphosphate = N(6)-dimethylallyladenosine(37) in tRNA + diphosphate. In terms of biological role, catalyzes the transfer of a dimethylallyl group onto the adenine at position 37 in tRNAs that read codons beginning with uridine, leading to the formation of N6-(dimethylallyl)adenosine (i(6)A). The polypeptide is tRNA dimethylallyltransferase (miaA) (Helicobacter pylori (strain G27)).